Reading from the N-terminus, the 461-residue chain is MLKIYNSLTRQKEEFKPITEGKVGMYVCGVTIYDLCHIGHGRTFVSFDVISRYLRFLGYDLTFVRNITDIDDKIIKRAAENGETCDALTERLIADMHADFDALNMKRPDVEPRATEYIKEIIALVERLIERGFAYVASNGDVMFEVKKYDEYGCLSRQDLEQLQAGSRVTLEEASVKRSGMDFVLWKMSKPGEPTWESPWGPGRPGWHIECSAMNSSILGDHFDIHGGGSDLMFPHHENEIAQSCCAHDTPYVNTWMHSGMVMVDREKMSKSLGNFFTIRDVLAHYDSETVRYFLMSGHYRSQLNYSEENLNQARASLERLYTSLRGLDLSVTPAGGEEFVGRFSTAMNDDFNTPEAYSVLFEMAREVNRLKTENIDTASKLGALMRELADVLGLLSQEPEAFLQGGSSNDDVAEIEALIKARNDARAAKDWAAADAARDAIAALNIVLEDGPEGTTWRRK.

A Zn(2+)-binding site is contributed by Cys28. The 'HIGH' region motif lies at 30 to 40 (VTIYDLCHIGH). Zn(2+) contacts are provided by Cys211, His236, and Glu240. The short motif at 268-272 (KMSKS) is the 'KMSKS' region element. ATP is bound at residue Lys271.

Belongs to the class-I aminoacyl-tRNA synthetase family. In terms of assembly, monomer. Requires Zn(2+) as cofactor.

The protein localises to the cytoplasm. The catalysed reaction is tRNA(Cys) + L-cysteine + ATP = L-cysteinyl-tRNA(Cys) + AMP + diphosphate. This is Cysteine--tRNA ligase from Aliivibrio fischeri (strain ATCC 700601 / ES114) (Vibrio fischeri).